The sequence spans 413 residues: Peptidase T (413 aa).

Position 84 (histidine 84) interacts with Zn(2+). Residue aspartate 86 is part of the active site. Aspartate 146 is a Zn(2+) binding site. Residue glutamate 180 is the Proton acceptor of the active site. Residues glutamate 181, aspartate 203, and histidine 385 each coordinate Zn(2+).

This sequence belongs to the peptidase M20B family. Zn(2+) serves as cofactor.

It is found in the cytoplasm. The enzyme catalyses Release of the N-terminal residue from a tripeptide.. Functionally, cleaves the N-terminal amino acid of tripeptides. The sequence is that of Peptidase T from Limosilactobacillus fermentum (strain NBRC 3956 / LMG 18251) (Lactobacillus fermentum).